The primary structure comprises 83 residues: Exodeoxyribonuclease 7 small subunit (83 aa).

The protein belongs to the XseB family. Heterooligomer composed of large and small subunits.

The protein localises to the cytoplasm. It carries out the reaction Exonucleolytic cleavage in either 5'- to 3'- or 3'- to 5'-direction to yield nucleoside 5'-phosphates.. In terms of biological role, bidirectionally degrades single-stranded DNA into large acid-insoluble oligonucleotides, which are then degraded further into small acid-soluble oligonucleotides. This chain is Exodeoxyribonuclease 7 small subunit, found in Rhizobium etli (strain ATCC 51251 / DSM 11541 / JCM 21823 / NBRC 15573 / CFN 42).